Consider the following 90-residue polypeptide: FMRFamide-like neuropeptides 27 (90 aa).

The signal sequence occupies residues 1–24; sequence MFSFRKFLAFMLIVIALMASFSSA. Residues 25 to 36 constitute a propeptide that is removed on maturation; sequence QPIDEERPIFME. At Phe-61 the chain carries Phenylalanine amide. The propeptide occupies 65–90; the sequence is SSSPSDISMAELRAIYGGGPVEYVQL.

This sequence belongs to the FARP (FMRFamide related peptide) family.

Its subcellular location is the secreted. Its function is as follows. FMRFamides and FMRFamide-like peptides are neuropeptides. In Caenorhabditis briggsae, this protein is FMRFamide-like neuropeptides 27.